Here is a 597-residue protein sequence, read N- to C-terminus: Aspartate--tRNA ligase (597 aa).

Glutamate 180 lines the L-aspartate pocket. The aspartate stretch occupies residues 204 to 207 (QLFK). Position 226 (arginine 226) interacts with L-aspartate. ATP is bound by residues 226–228 (RDE) and glutamine 235. Histidine 454 is a binding site for L-aspartate. Glutamate 488 lines the ATP pocket. Arginine 495 lines the L-aspartate pocket. Residue 540–543 (GLDR) coordinates ATP.

This sequence belongs to the class-II aminoacyl-tRNA synthetase family. Type 1 subfamily. In terms of assembly, homodimer.

It localises to the cytoplasm. It carries out the reaction tRNA(Asp) + L-aspartate + ATP = L-aspartyl-tRNA(Asp) + AMP + diphosphate. In terms of biological role, catalyzes the attachment of L-aspartate to tRNA(Asp) in a two-step reaction: L-aspartate is first activated by ATP to form Asp-AMP and then transferred to the acceptor end of tRNA(Asp). This is Aspartate--tRNA ligase from Clostridium perfringens (strain ATCC 13124 / DSM 756 / JCM 1290 / NCIMB 6125 / NCTC 8237 / Type A).